Here is a 217-residue protein sequence, read N- to C-terminus: Ras-related protein Rab-39A (217 aa).

Positions 17, 20, 21, 22, 23, and 44 each coordinate GTP. Ser22 serves as a coordination point for Mg(2+). Residues 39 to 47 (PACDPTVGV) are switch-I. Positions 44 and 68 each coordinate Mg(2+). 6 residues coordinate GTP: Gly71, His127, Lys128, Asp130, Ala158, and Lys159. A switch-II region spans residues 71–87 (GQERFRSITRSYYRNSV). 2 S-geranylgeranyl cysteine lipidation sites follow: Cys215 and Cys217. The residue at position 217 (Cys217) is a Cysteine methyl ester.

This sequence belongs to the small GTPase superfamily. Rab family. Interacts (GDP-bound) with C9orf72; C9orf72 acts as a GEF for RAB39A. Interacts (GTP-bound) with HOPS complex components VPS39 and VPS41, and STX17; interaction between HOPS components and RAB39A contributes to obtaining a functional HOPS complex that promotes membrane fusion driven by STX17-SNAP29-VAMP8. Interacts with BECN1. Probably associates with the PI3K (PI3KC3/PI3K-III/class III phosphatidylinositol 3-kinase) complex. Interacts with UACA. Interacts with isoform a of RASSF1. Does not interact with isoform c of RASSF1. It depends on Mg(2+) as a cofactor. Prenylated. Prenylation is required for association with cellular membranes.

It localises to the cell membrane. Its subcellular location is the cytoplasmic vesicle. The protein localises to the phagosome membrane. The protein resides in the lysosome membrane. It is found in the autolysosome membrane. The catalysed reaction is GTP + H2O = GDP + phosphate + H(+). Its activity is regulated as follows. Regulated by guanine nucleotide exchange factors (GEFs) including c9Orf72, which promote the exchange of bound GDP for free GTP. Regulated by GTPase activating proteins (GAPs) which increase the GTP hydrolysis activity. Inhibited by GDP dissociation inhibitors (GDIs). In terms of biological role, the small GTPases Rab are key regulators of intracellular membrane trafficking, from the formation of transport vesicles to their fusion with membranes. Rabs cycle between an inactive GDP-bound form and an active GTP-bound form that is able to recruit to membranes different sets of downstream effectors directly responsible for vesicle formation, movement, tethering and fusion. RAB39A regulates autophagosome-lysosome fusion via recruitment of the HOPS endosomal tethering complex onto lysosomes; this process involves lysosomal RAB39A and autophagosomal RAB2A recruitment of HOPS subcomplexes VPS41-VPS16-VPS18-VPS33A and VPS39-VPS11, respectively, which assemble into a functional complex to mediate membrane tethering and SNAREs-driven membrane fusion. Also negatively regulates lipopolysaccharide (LPS)-induced autophagosome formation in macrophages, possibly by implicating PI3K. Promotes the delivery of MHC-I molecules from the ER to phagosomes and the generation of peptide-loaded MHC-I complexes in phagosomes, thus enhancing antigen cross-presentation by dendritic cells. Plays a role in the maturation and acidification of phagosomes that engulf pathogens, such as S.aureus and M.tuberculosis. Plays a role in the fusion of phagosomes with lysosomes. May be involved in multiple neurite formation. In Homo sapiens (Human), this protein is Ras-related protein Rab-39A.